The chain runs to 70 residues: DNA gyrase inhibitor YacG (70 aa).

Residues C20, C23, C35, and C39 each contribute to the Zn(2+) site.

This sequence belongs to the DNA gyrase inhibitor YacG family. As to quaternary structure, interacts with GyrB. Zn(2+) is required as a cofactor.

In terms of biological role, inhibits all the catalytic activities of DNA gyrase by preventing its interaction with DNA. Acts by binding directly to the C-terminal domain of GyrB, which probably disrupts DNA binding by the gyrase. The polypeptide is DNA gyrase inhibitor YacG (Rhizobium leguminosarum bv. trifolii (strain WSM2304)).